The chain runs to 160 residues: Negative modulator of initiation of replication (160 aa).

Belongs to the SeqA family. Homodimer. Polymerizes to form helical filaments.

It localises to the cytoplasm. In terms of biological role, negative regulator of replication initiation, which contributes to regulation of DNA replication and ensures that replication initiation occurs exactly once per chromosome per cell cycle. Binds to pairs of hemimethylated GATC sequences in the oriC region, thus preventing assembly of replication proteins and re-initiation at newly replicated origins. Repression is relieved when the region becomes fully methylated. This chain is Negative modulator of initiation of replication, found in Idiomarina loihiensis (strain ATCC BAA-735 / DSM 15497 / L2-TR).